Consider the following 100-residue polypeptide: NADH-quinone oxidoreductase subunit K (100 aa).

Transmembrane regions (helical) follow at residues 1–21 (MIGLNHYLIVSGLLFCIGLAG), 28–48 (ILLLFFSTEIMLNAINIGFVA), and 64–84 (FIIAIAASEVAIGLGLVILWF).

This sequence belongs to the complex I subunit 4L family. As to quaternary structure, NDH-1 is composed of 14 different subunits. Subunits NuoA, H, J, K, L, M, N constitute the membrane sector of the complex.

The protein resides in the cell inner membrane. It catalyses the reaction a quinone + NADH + 5 H(+)(in) = a quinol + NAD(+) + 4 H(+)(out). Its function is as follows. NDH-1 shuttles electrons from NADH, via FMN and iron-sulfur (Fe-S) centers, to quinones in the respiratory chain. The immediate electron acceptor for the enzyme in this species is believed to be ubiquinone. Couples the redox reaction to proton translocation (for every two electrons transferred, four hydrogen ions are translocated across the cytoplasmic membrane), and thus conserves the redox energy in a proton gradient. This chain is NADH-quinone oxidoreductase subunit K, found in Helicobacter pylori (strain P12).